Consider the following 873-residue polypeptide: DNA mismatch repair protein MutS (873 aa).

ATP is bound at residue Gly625–Ser632.

Belongs to the DNA mismatch repair MutS family.

Its function is as follows. This protein is involved in the repair of mismatches in DNA. It is possible that it carries out the mismatch recognition step. This protein has a weak ATPase activity. The polypeptide is DNA mismatch repair protein MutS (Xanthomonas oryzae pv. oryzae (strain KACC10331 / KXO85)).